Consider the following 786-residue polypeptide: Kazrin-A (786 aa).

Residues Glu-44–Lys-70 form a disordered region. Positions His-52 to Gln-62 are enriched in low complexity. The stretch at Leu-92–Pro-270 forms a coiled coil. The segment at Met-350–Ser-425 is disordered. 3 SAM domains span residues Trp-457–Ala-522, Asp-535–Leu-599, and Trp-623–Met-686. The interval Pro-703–Arg-760 is disordered. Polar residues predominate over residues Lys-742–Phe-758.

The protein belongs to the kazrin family.

The polypeptide is Kazrin-A (kazna) (Danio rerio (Zebrafish)).